Here is a 411-residue protein sequence, read N- to C-terminus: Glutamate dehydrogenase A (411 aa).

Residue Lys-102 is part of the active site.

Belongs to the Glu/Leu/Phe/Val dehydrogenases family.

The enzyme catalyses L-glutamate + NAD(+) + H2O = 2-oxoglutarate + NH4(+) + NADH + H(+). The catalysed reaction is L-glutamate + NADP(+) + H2O = 2-oxoglutarate + NH4(+) + NADPH + H(+). This is Glutamate dehydrogenase A (GDHA) from Nicotiana plumbaginifolia (Leadwort-leaved tobacco).